The primary structure comprises 336 residues: Fructose-1,6-bisphosphatase class 1 (336 aa).

Residues glutamate 91, aspartate 114, leucine 116, and aspartate 117 each contribute to the Mg(2+) site. Substrate-binding positions include 117 to 120, asparagine 210, tyrosine 243, and lysine 273; that span reads DGSS. A Mg(2+)-binding site is contributed by glutamate 279.

The protein belongs to the FBPase class 1 family. In terms of assembly, homotetramer. Requires Mg(2+) as cofactor.

The protein resides in the cytoplasm. It carries out the reaction beta-D-fructose 1,6-bisphosphate + H2O = beta-D-fructose 6-phosphate + phosphate. The protein operates within carbohydrate biosynthesis; gluconeogenesis. The protein is Fructose-1,6-bisphosphatase class 1 of Dichelobacter nodosus (strain VCS1703A).